The chain runs to 94 residues: Large ribosomal subunit protein bL27 (94 aa).

Residues 1–9 constitute a propeptide that is removed on maturation; sequence MLKMNLQFF.

This sequence belongs to the bacterial ribosomal protein bL27 family. The N-terminus is cleaved by ribosomal processing cysteine protease Prp.

This chain is Large ribosomal subunit protein bL27, found in Halalkalibacterium halodurans (strain ATCC BAA-125 / DSM 18197 / FERM 7344 / JCM 9153 / C-125) (Bacillus halodurans).